A 144-amino-acid chain; its full sequence is Protein MIX23 (144 aa).

Position 2 is an N-acetylalanine (Ala2). Positions 82–120 (VKSLREEREKNLDDLTLLKRLRKEQTKLKWMQSELNVEE) form a coiled coil. Residue Lys100 is modified to N6-acetyllysine.

It belongs to the MIX23 family.

The sequence is that of Protein MIX23 from Mus musculus (Mouse).